The primary structure comprises 442 residues: MAQFFKAKPNSSKQLSAKVTLEVTKLDHLGAGMAQHQGKIVFIPGALPNEKVTVQLTEQKKRHARAKLLKIESDSNDRVEPKCPHYQQCGGCDLQHLSIDKQRSYKQSALVDLMAKLSHTEAESLAPALIGQEWDYRRRARLATHYNKESKQITLGFRASASKQVINIDVCPVLAKPLSDLIAPLSLLLNQLSGKKALGHLELIDADNGYFAVLRMTKALSDKDAKKLTAFANEKSISLIVQGNEGEFTILGDRNELPYYALDDVKLNFTPGNFIQVNAAINESMVKQAVDWLSVKPNERVLDLFCGVGNFSLPLAKSGAEVIGVEGVPEMVKQARENAADSGLDNVSFFHTDLSADLSKETWLGKVDKLLLDPARAGAFESLQWLKKMKPKAIVYVSCDPSSLARDSEPLLKHGYKLKKLGLIDMFPQTHHIEAMALFELD.

In terms of domain architecture, TRAM spans 12–70 (SKQLSAKVTLEVTKLDHLGAGMAQHQGKIVFIPGALPNEKVTVQLTEQKKRHARAKLLK). The [4Fe-4S] cluster site is built by Cys-83, Cys-89, Cys-92, and Cys-171. S-adenosyl-L-methionine contacts are provided by Gln-276, Phe-305, Asn-310, Glu-326, Asp-353, and Asp-373. The active-site Nucleophile is the Cys-399.

This sequence belongs to the class I-like SAM-binding methyltransferase superfamily. RNA M5U methyltransferase family. RlmD subfamily.

The enzyme catalyses uridine(1939) in 23S rRNA + S-adenosyl-L-methionine = 5-methyluridine(1939) in 23S rRNA + S-adenosyl-L-homocysteine + H(+). Catalyzes the formation of 5-methyl-uridine at position 1939 (m5U1939) in 23S rRNA. This is 23S rRNA (uracil(1939)-C(5))-methyltransferase RlmD from Shewanella sediminis (strain HAW-EB3).